Reading from the N-terminus, the 864-residue chain is DNA mismatch repair protein MutS (864 aa).

607–614 is an ATP binding site; that stretch reads GPNMGGKS.

This sequence belongs to the DNA mismatch repair MutS family.

In terms of biological role, this protein is involved in the repair of mismatches in DNA. It is possible that it carries out the mismatch recognition step. This protein has a weak ATPase activity. The protein is DNA mismatch repair protein MutS of Neisseria meningitidis serogroup B (strain ATCC BAA-335 / MC58).